We begin with the raw amino-acid sequence, 554 residues long: Apyrase (554 aa).

Positions 1–21 (MFKITVFIYVLQLILPSKVHS) are cleaved as a signal peptide. A divalent metal cation is bound by residues Asp43, His45, Asp92, Asn124, His224, and His248. AMP contacts are provided by Arg358, Asn394, Arg399, Phe418, Phe504, and Asp510.

Belongs to the 5'-nucleotidase family. Requires a divalent metal cation as cofactor. As to expression, salivary gland (at protein level).

Its subcellular location is the secreted. It catalyses the reaction a ribonucleoside 5'-triphosphate + 2 H2O = a ribonucleoside 5'-phosphate + 2 phosphate + 2 H(+). Functionally, facilitates hematophagy by inhibiting ADP-dependent platelet aggregation in the host. Cleaves adenosine triphosphate (ATP) and adenosine diphosphate (ADP) to adenosine monophosphate (AMP) and inorganic phosphate. Shows potential for antithrombotic activity. Can induce basophil activation. May reduce probing time by facilitating the speed of locating blood. The protein is Apyrase of Tabanus yao (Horsefly).